Here is a 217-residue protein sequence, read N- to C-terminus: Somatotropin (217 aa).

Positions methionine 1–glycine 26 are cleaved as a signal peptide. Histidine 46 serves as a coordination point for Zn(2+). Cysteines 79 and 190 form a disulfide. Serine 132 is modified (phosphoserine). Glutamate 199 provides a ligand contact to Zn(2+). A disulfide bridge links cysteine 207 with cysteine 215.

Belongs to the somatotropin/prolactin family.

Its subcellular location is the secreted. Its function is as follows. Plays an important role in growth control. Its major role in stimulating body growth is to stimulate the liver and other tissues to secrete IGF1. It stimulates both the differentiation and proliferation of myoblasts. It also stimulates amino acid uptake and protein synthesis in muscle and other tissues. This Bos taurus (Bovine) protein is Somatotropin (GH1).